The chain runs to 599 residues: Elongation factor 4 (599 aa).

A tr-type G domain is found at 4–186 (KFIRNFSIIA…AIIKHVPPPL (183 aa)). GTP is bound by residues 16-21 (DHGKST) and 133-136 (NKID).

This sequence belongs to the TRAFAC class translation factor GTPase superfamily. Classic translation factor GTPase family. LepA subfamily.

Its subcellular location is the cell membrane. The enzyme catalyses GTP + H2O = GDP + phosphate + H(+). Functionally, required for accurate and efficient protein synthesis under certain stress conditions. May act as a fidelity factor of the translation reaction, by catalyzing a one-codon backward translocation of tRNAs on improperly translocated ribosomes. Back-translocation proceeds from a post-translocation (POST) complex to a pre-translocation (PRE) complex, thus giving elongation factor G a second chance to translocate the tRNAs correctly. Binds to ribosomes in a GTP-dependent manner. The chain is Elongation factor 4 from Ureaplasma urealyticum serovar 10 (strain ATCC 33699 / Western).